A 297-amino-acid polypeptide reads, in one-letter code: Probable GTP 3',8-cyclase (297 aa).

A Radical SAM core domain is found at 4-220 (EFGREIRSFR…VVTRKFMQNR (217 aa)). GTP is bound at residue Arg13. The [4Fe-4S] cluster site is built by Cys20 and Cys24. Position 26 (Tyr26) interacts with S-adenosyl-L-methionine. Cys27 contacts [4Fe-4S] cluster. Lys61 lines the GTP pocket. Gly65 is an S-adenosyl-L-methionine binding site. Thr91 is a GTP binding site. An S-adenosyl-L-methionine-binding site is contributed by Ser115. Lys151 is a GTP binding site. Positions 242 and 245 each coordinate [4Fe-4S] cluster. Residue 247–249 (RIR) coordinates GTP. Cys259 provides a ligand contact to [4Fe-4S] cluster.

Belongs to the radical SAM superfamily. MoaA family. Requires [4Fe-4S] cluster as cofactor.

It catalyses the reaction GTP + AH2 + S-adenosyl-L-methionine = (8S)-3',8-cyclo-7,8-dihydroguanosine 5'-triphosphate + 5'-deoxyadenosine + L-methionine + A + H(+). It functions in the pathway cofactor biosynthesis; molybdopterin biosynthesis. In terms of biological role, catalyzes the cyclization of GTP to (8S)-3',8-cyclo-7,8-dihydroguanosine 5'-triphosphate. This Methanococcus vannielii (strain ATCC 35089 / DSM 1224 / JCM 13029 / OCM 148 / SB) protein is Probable GTP 3',8-cyclase.